We begin with the raw amino-acid sequence, 40 residues long: Photosystem II reaction center protein J (40 aa).

A helical transmembrane segment spans residues 8 to 28 (IPLWLVGTVTGIPVIGLIGVF).

It belongs to the PsbJ family. PSII is composed of 1 copy each of membrane proteins PsbA, PsbB, PsbC, PsbD, PsbE, PsbF, PsbH, PsbI, PsbJ, PsbK, PsbL, PsbM, PsbT, PsbX, PsbY, PsbZ, Psb30/Ycf12, at least 3 peripheral proteins of the oxygen-evolving complex and a large number of cofactors. It forms dimeric complexes.

It is found in the plastid. The protein resides in the chloroplast thylakoid membrane. In terms of biological role, one of the components of the core complex of photosystem II (PSII). PSII is a light-driven water:plastoquinone oxidoreductase that uses light energy to abstract electrons from H(2)O, generating O(2) and a proton gradient subsequently used for ATP formation. It consists of a core antenna complex that captures photons, and an electron transfer chain that converts photonic excitation into a charge separation. This Musa acuminata (Banana) protein is Photosystem II reaction center protein J.